A 153-amino-acid polypeptide reads, in one-letter code: Large ribosomal subunit protein uL23m (153 aa).

The segment at 131–153 is disordered; it reads MADEQQRQGSDPQRGGVPNWFSL.

The protein belongs to the universal ribosomal protein uL23 family. As to quaternary structure, component of the mitochondrial ribosome large subunit (39S) which comprises a 16S rRNA and about 50 distinct proteins.

The protein localises to the mitochondrion. This Otolemur garnettii (Small-eared galago) protein is Large ribosomal subunit protein uL23m (MRPL23).